Reading from the N-terminus, the 415-residue chain is Adipocyte plasma membrane-associated protein (415 aa).

The tract at residues 1 to 29 (MSEADGLRQRRPLRPQVVTDDGQVPEVKE) is disordered. Ser2 is subject to N-acetylserine. At 2-39 (SEADGLRQRRPLRPQVVTDDGQVPEVKEGSSFSGRVFR) the chain is on the cytoplasmic side. Thr19 carries the post-translational modification Phosphothreonine. A helical; Signal-anchor for type II membrane protein transmembrane segment spans residues 40–60 (MTFLMLAVSLAIPLLGAMMLL). The Extracellular portion of the chain corresponds to 61-415 (ESPIDPQSFS…FICRLSLQSI (355 aa)). A glycan (N-linked (GlcNAc...) asparagine) is linked at Asn159.

It belongs to the strictosidine synthase family. Post-translationally, glycosylated in vitro. Strongly expressed in adipose tissue. Highly expressed in liver, heart, and kidney. Expressed at intermediate level in brain and lung. Weakly expressed in spleen, skeletal muscle and testis.

It is found in the membrane. In terms of biological role, exhibits strong arylesterase activity with beta-naphthyl acetate and phenyl acetate. May play a role in adipocyte differentiation. This chain is Adipocyte plasma membrane-associated protein (Apmap), found in Mus musculus (Mouse).